The primary structure comprises 338 residues: Uroporphyrinogen decarboxylase (338 aa).

Residues 21 to 25, Asp71, Tyr146, Ser201, and His316 contribute to the substrate site; that span reads RQAGR.

It belongs to the uroporphyrinogen decarboxylase family. As to quaternary structure, homodimer.

The protein localises to the cytoplasm. The catalysed reaction is uroporphyrinogen III + 4 H(+) = coproporphyrinogen III + 4 CO2. It functions in the pathway porphyrin-containing compound metabolism; protoporphyrin-IX biosynthesis; coproporphyrinogen-III from 5-aminolevulinate: step 4/4. Catalyzes the decarboxylation of four acetate groups of uroporphyrinogen-III to yield coproporphyrinogen-III. In Rickettsia akari (strain Hartford), this protein is Uroporphyrinogen decarboxylase.